An 885-amino-acid polypeptide reads, in one-letter code: Glycerol-3-phosphate acyltransferase (885 aa).

The span at 1 to 17 (MPEQNPLPFPDGQPSPP) shows a compositional bias: pro residues. The disordered stretch occupies residues 1 to 26 (MPEQNPLPFPDGQPSPPSTAAADTGA). Residues 362 to 367 (HRSHMD) carry the HXXXXD motif motif.

The protein belongs to the GPAT/DAPAT family.

The protein resides in the cell inner membrane. It catalyses the reaction sn-glycerol 3-phosphate + an acyl-CoA = a 1-acyl-sn-glycero-3-phosphate + CoA. Its pathway is phospholipid metabolism; CDP-diacylglycerol biosynthesis; CDP-diacylglycerol from sn-glycerol 3-phosphate: step 1/3. The polypeptide is Glycerol-3-phosphate acyltransferase (Xanthomonas axonopodis pv. citri (strain 306)).